We begin with the raw amino-acid sequence, 109 residues long: Large ribosomal subunit protein eL30A (109 aa).

The protein belongs to the eukaryotic ribosomal protein eL30 family. In terms of assembly, component of the large ribosomal subunit (LSU). Mature yeast ribosomes consist of a small (40S) and a large (60S) subunit. The 40S small subunit contains 1 molecule of ribosomal RNA (18S rRNA) and at least 33 different proteins. The large 60S subunit contains 3 rRNA molecules (25S, 5.8S and 5S rRNA) and at least 46 different proteins.

Its subcellular location is the cytoplasm. Component of the ribosome, a large ribonucleoprotein complex responsible for the synthesis of proteins in the cell. The small ribosomal subunit (SSU) binds messenger RNAs (mRNAs) and translates the encoded message by selecting cognate aminoacyl-transfer RNA (tRNA) molecules. The large subunit (LSU) contains the ribosomal catalytic site termed the peptidyl transferase center (PTC), which catalyzes the formation of peptide bonds, thereby polymerizing the amino acids delivered by tRNAs into a polypeptide chain. The nascent polypeptides leave the ribosome through a tunnel in the LSU and interact with protein factors that function in enzymatic processing, targeting, and the membrane insertion of nascent chains at the exit of the ribosomal tunnel. The sequence is that of Large ribosomal subunit protein eL30A (rpl3001) from Schizosaccharomyces pombe (strain 972 / ATCC 24843) (Fission yeast).